We begin with the raw amino-acid sequence, 292 residues long: tRNA-cytidine(32) 2-sulfurtransferase (292 aa).

The PP-loop motif motif lies at 53-58 (SGGKDS). Cysteine 128, cysteine 131, and cysteine 219 together coordinate [4Fe-4S] cluster.

This sequence belongs to the TtcA family. In terms of assembly, homodimer. Mg(2+) serves as cofactor. [4Fe-4S] cluster is required as a cofactor.

It is found in the cytoplasm. The enzyme catalyses cytidine(32) in tRNA + S-sulfanyl-L-cysteinyl-[cysteine desulfurase] + AH2 + ATP = 2-thiocytidine(32) in tRNA + L-cysteinyl-[cysteine desulfurase] + A + AMP + diphosphate + H(+). The protein operates within tRNA modification. Catalyzes the ATP-dependent 2-thiolation of cytidine in position 32 of tRNA, to form 2-thiocytidine (s(2)C32). The sulfur atoms are provided by the cysteine/cysteine desulfurase (IscS) system. In Cereibacter sphaeroides (strain ATCC 17029 / ATH 2.4.9) (Rhodobacter sphaeroides), this protein is tRNA-cytidine(32) 2-sulfurtransferase.